A 374-amino-acid chain; its full sequence is Homoserine O-succinyltransferase (374 aa).

The AB hydrolase-1 domain occupies 47 to 357 (NAILVCHALS…NFGHDSFLME (311 aa)). Residue S153 is the Nucleophile of the active site. Substrate is bound at residue R223. Catalysis depends on residues D318 and H351. D352 provides a ligand contact to substrate.

The protein belongs to the AB hydrolase superfamily. MetX family. In terms of assembly, homodimer.

It is found in the cytoplasm. The catalysed reaction is L-homoserine + succinyl-CoA = O-succinyl-L-homoserine + CoA. It functions in the pathway amino-acid biosynthesis; L-methionine biosynthesis via de novo pathway; O-succinyl-L-homoserine from L-homoserine: step 1/1. Transfers a succinyl group from succinyl-CoA to L-homoserine, forming succinyl-L-homoserine. The sequence is that of Homoserine O-succinyltransferase from Dechloromonas aromatica (strain RCB).